We begin with the raw amino-acid sequence, 913 residues long: Probable TonB-dependent receptor HI_1217 (913 aa).

Positions 1 to 27 are cleaved as a signal peptide; it reads MKKAIKLNLITLGLINTIGMTITQAQA. The region spanning 42–165 is the TBDR plug domain; sequence SNDKKPFTEA…LAGSANFRTL (124 aa). The TBDR beta-barrel domain maps to 176-913; it reads PFGIILKGMT…TYILSLNYKF (738 aa). The TonB C-terminal box motif lies at 896 to 913; sequence LYNFARGRTYILSLNYKF.

Belongs to the TonB-dependent receptor family.

It is found in the cell outer membrane. Functionally, probable receptor, TonB-dependent. This is Probable TonB-dependent receptor HI_1217 from Haemophilus influenzae (strain ATCC 51907 / DSM 11121 / KW20 / Rd).